The sequence spans 281 residues: 4-deoxy-L-threo-5-hexosulose-uronate ketol-isomerase (281 aa).

Residues His198, His200, Glu205, and His248 each coordinate Zn(2+).

This sequence belongs to the KduI family. It depends on Zn(2+) as a cofactor.

The enzyme catalyses 5-dehydro-4-deoxy-D-glucuronate = 3-deoxy-D-glycero-2,5-hexodiulosonate. The protein operates within glycan metabolism; pectin degradation; 2-dehydro-3-deoxy-D-gluconate from pectin: step 4/5. Catalyzes the isomerization of 5-dehydro-4-deoxy-D-glucuronate to 3-deoxy-D-glycero-2,5-hexodiulosonate. This Lacticaseibacillus paracasei (strain ATCC 334 / BCRC 17002 / CCUG 31169 / CIP 107868 / KCTC 3260 / NRRL B-441) (Lactobacillus paracasei) protein is 4-deoxy-L-threo-5-hexosulose-uronate ketol-isomerase.